The following is a 205-amino-acid chain: Inactive ribonuclease-like protein 9 (205 aa).

Positions 1–24 (MMLITTHSLLLLLLLLQLLQPLQF) are cleaved as a signal peptide. Cystine bridges form between cysteine 97–cysteine 152, cysteine 115–cysteine 167, and cysteine 122–cysteine 129. N-linked (GlcNAc...) asparagine glycans are attached at residues asparagine 130 and asparagine 142.

It belongs to the pancreatic ribonuclease family.

It localises to the secreted. In terms of biological role, does not exhibit any ribonuclease activity. The protein is Inactive ribonuclease-like protein 9 (RNASE9) of Cebus capucinus (White-faced sapajou).